The sequence spans 597 residues: Elongation factor 4 (597 aa).

The 183-residue stretch at 2 to 184 (KNIRNFSIIA…EIVAKIPAPT (183 aa)) folds into the tr-type G domain. Residues 14 to 19 (DHGKST) and 131 to 134 (NKID) contribute to the GTP site.

It belongs to the TRAFAC class translation factor GTPase superfamily. Classic translation factor GTPase family. LepA subfamily.

It is found in the cell inner membrane. It carries out the reaction GTP + H2O = GDP + phosphate + H(+). Its function is as follows. Required for accurate and efficient protein synthesis under certain stress conditions. May act as a fidelity factor of the translation reaction, by catalyzing a one-codon backward translocation of tRNAs on improperly translocated ribosomes. Back-translocation proceeds from a post-translocation (POST) complex to a pre-translocation (PRE) complex, thus giving elongation factor G a second chance to translocate the tRNAs correctly. Binds to ribosomes in a GTP-dependent manner. The polypeptide is Elongation factor 4 (Neisseria meningitidis serogroup C (strain 053442)).